The chain runs to 455 residues: DNA N(6)-methyladenine demethylase ALKBH1C (455 aa).

Disordered regions lie at residues 1 to 114 and 173 to 194; these read MNHS…AGDN and SSVEDQKSAPKADGAGNSSNES. The 111-residue stretch at 345–455 folds into the Fe2OG dioxygenase domain; sequence LPDICIVNFY…GRLNLTFRQY (111 aa). 352–354 contacts 2-oxoglutarate; sequence NFY. The Fe cation site is built by histidine 363, aspartate 365, and histidine 423. A 2-oxoglutarate-binding site is contributed by 447 to 453; that stretch reads RLNLTFR.

Belongs to the alkB family. Fe(2+) is required as a cofactor. Expressed at low levels in roots and seedlings, but barely in cauline leaves, rosette leaves, stems, siliques and flowers.

It localises to the nucleus. The protein localises to the cytoplasm. It carries out the reaction an N(6)-methyl-2'-deoxyadenosine in DNA + 2-oxoglutarate + O2 = a 2'-deoxyadenosine in DNA + formaldehyde + succinate + CO2. In terms of biological role, dioxygenase that catalyzes DNA N(6)-methyladenine (6 mA) demethylation with a low efficiency. The chain is DNA N(6)-methyladenine demethylase ALKBH1C from Arabidopsis thaliana (Mouse-ear cress).